Consider the following 60-residue polypeptide: UPF0434 protein Spro_1718 (60 aa).

Belongs to the UPF0434 family.

This Serratia proteamaculans (strain 568) protein is UPF0434 protein Spro_1718.